Reading from the N-terminus, the 104-residue chain is Large ribosomal subunit protein uL24 (104 aa).

This sequence belongs to the universal ribosomal protein uL24 family. As to quaternary structure, part of the 50S ribosomal subunit.

Its function is as follows. One of two assembly initiator proteins, it binds directly to the 5'-end of the 23S rRNA, where it nucleates assembly of the 50S subunit. One of the proteins that surrounds the polypeptide exit tunnel on the outside of the subunit. This Pseudoalteromonas atlantica (strain T6c / ATCC BAA-1087) protein is Large ribosomal subunit protein uL24.